Here is a 102-residue protein sequence, read N- to C-terminus: Feather keratin (102 aa).

S1 is modified (N-acetylserine).

Belongs to the avian keratin family. The avian keratins (F-ker, S-ker, C-ker and B-ker) are a complex mixture of very similar polypeptides.

This is Feather keratin from Dromaius novaehollandiae (Emu).